Reading from the N-terminus, the 398-residue chain is Argininosuccinate synthase (398 aa).

ATP-binding positions include 9–17 (AYSGGLDTS) and Ala36. L-citrulline-binding residues include Tyr87 and Ser92. Gly117 is an ATP binding site. Thr119, Asn123, and Asp124 together coordinate L-aspartate. Residue Asn123 participates in L-citrulline binding. L-citrulline contacts are provided by Arg127, Ser176, Ser185, Glu261, and Tyr273.

This sequence belongs to the argininosuccinate synthase family. Type 1 subfamily. In terms of assembly, homotetramer.

The protein resides in the cytoplasm. The catalysed reaction is L-citrulline + L-aspartate + ATP = 2-(N(omega)-L-arginino)succinate + AMP + diphosphate + H(+). The protein operates within amino-acid biosynthesis; L-arginine biosynthesis; L-arginine from L-ornithine and carbamoyl phosphate: step 2/3. This chain is Argininosuccinate synthase, found in Desulfotalea psychrophila (strain LSv54 / DSM 12343).